A 473-amino-acid chain; its full sequence is MSSNNGDVRLWGGRFADGPADALARLSASVHFDWRLAPYDIAGSRAHARVLNRAGLLTEDELTRMLAGLDRWPPMWRTLLHRTIADEDVHTALERGLLERLGAELGGKLRAGRSRNDQVATLFRMYLRTTPGSSGLIAELQDALVGLAEAHPEVAMPGRTHLQHAQPVLFAHHVLAHVQALSRDAERLRQWDARTAVSPYGSGALAGSSLGLDPEAVAADLGFEGGSAGNSIDGTASRDFVAEFAFITAMAGINLSRLAEEIIIWNTKEFSFVTLHDAFSTGSSIMPQKKNPDIAELARGKSGRLIGNLTGLLATLKALPLAYNRDLQEDKEPVFDSCDQLEVLLPAFTGMVATLTVHRERMEELAPAGFSLATDIAEWLVRQGVPFRVAHDVAGACVKECESAGIELHQLTDEQFAAISEHLTPEVRSVLTVRGALASRDGRGGTAPSAVAVQLAEVKADLAVQHAWAARES.

Belongs to the lyase 1 family. Argininosuccinate lyase subfamily.

Its subcellular location is the cytoplasm. The catalysed reaction is 2-(N(omega)-L-arginino)succinate = fumarate + L-arginine. Its pathway is amino-acid biosynthesis; L-arginine biosynthesis; L-arginine from L-ornithine and carbamoyl phosphate: step 3/3. This Streptomyces clavuligerus protein is Argininosuccinate lyase.